The sequence spans 366 residues: Aminomethyltransferase (366 aa).

The protein belongs to the GcvT family. The glycine cleavage system is composed of four proteins: P, T, L and H.

The catalysed reaction is N(6)-[(R)-S(8)-aminomethyldihydrolipoyl]-L-lysyl-[protein] + (6S)-5,6,7,8-tetrahydrofolate = N(6)-[(R)-dihydrolipoyl]-L-lysyl-[protein] + (6R)-5,10-methylene-5,6,7,8-tetrahydrofolate + NH4(+). Its function is as follows. The glycine cleavage system catalyzes the degradation of glycine. This Bacillus cereus (strain ATCC 10987 / NRS 248) protein is Aminomethyltransferase.